A 182-amino-acid chain; its full sequence is UPF0423 protein BRA0381/BS1330_II0378 (182 aa).

An N-terminal signal peptide occupies residues 1-24 (MKNLFRTAALMVPLSLALAYGAQA).

This sequence belongs to the UPF0423 family.

This is UPF0423 protein BRA0381/BS1330_II0378 from Brucella suis biovar 1 (strain 1330).